The chain runs to 101 residues: Urease subunit beta (101 aa).

This sequence belongs to the urease beta subunit family. Heterotrimer of UreA (gamma), UreB (beta) and UreC (alpha) subunits. Three heterotrimers associate to form the active enzyme.

The protein localises to the cytoplasm. The catalysed reaction is urea + 2 H2O + H(+) = hydrogencarbonate + 2 NH4(+). It participates in nitrogen metabolism; urea degradation; CO(2) and NH(3) from urea (urease route): step 1/1. This is Urease subunit beta from Azoarcus sp. (strain BH72).